A 1196-amino-acid chain; its full sequence is Probable cation-transporting ATPase 13A4 (1196 aa).

Residues 1–31 are Cytoplasmic-facing; that stretch reads MGHFEKGQHALLNEGEENEMEIFGYRTQGCR. An intramembrane segment occupies 32 to 52; the sequence is KSLCLAGSIFSFGILPLVFYW. The Cytoplasmic segment spans residues 53–197; sequence RPAWHVWAHC…DVEVTPIWKL (145 aa). Residues 198–218 form a helical membrane-spanning segment; that stretch reads LIKEVLNPFYIFQLFSVCLWF. Topologically, residues 219-223 are lumenal; that stretch reads SEDYK. The chain crosses the membrane as a helical span at residues 224–244; the sequence is EYAFAIIIMSIISISLTVYDL. Residues 245–400 are Cytoplasmic-facing; sequence REQSVKLHHL…NFQLYRDAIR (156 aa). A helical membrane pass occupies residues 401–421; sequence FLLCLVGTATIGMIYTLCVYV. Topologically, residues 422–436 are lumenal; sequence LSGEPPEEVVRKALD. Residues 437-457 traverse the membrane as a helical segment; sequence VITIAVPPALPAALTTGIIYA. Residues 458–900 lie on the Cytoplasmic side of the membrane; that stretch reads QRRLKKRGIF…KEGRAALVTS (443 aa). Asp-486 serves as the catalytic 4-aspartylphosphate intermediate. Mg(2+) is bound by residues Asp-848 and Asp-852. The chain crosses the membrane as a helical span at residues 901–921; the sequence is FCMFKYMALYSMIQYVGVLLL. The Lumenal segment spans residues 922–932; the sequence is YWETNSLSNYQ. The helical transmembrane segment at 933-953 threads the bilayer; the sequence is FLFQDLAITTLIGVTMNLNGA. At 954–972 the chain is on the cytoplasmic side; sequence YPKLVPFRPAGRLISPPLL. The chain crosses the membrane as a helical span at residues 973-993; it reads LSVIFNILLSLAMHIAGFILV. Topologically, residues 994-1035 are lumenal; it reads QRQPWYSVEIHSACTVQNESISELTMSPTAPEKMESNSTFTS. The helical transmembrane segment at 1036–1056 threads the bilayer; that stretch reads FENTTVWFLGTINCITVALVF. Over 1057-1070 the chain is Cytoplasmic; sequence SKGKPFRQPTYTNY. The chain crosses the membrane as a helical span at residues 1071–1091; it reads IFVLVLIIQLGVCLFILFADI. Residues 1092-1109 lie on the Lumenal side of the membrane; it reads PELYRRLDLLCTPVLWRA. The helical transmembrane segment at 1110–1130 threads the bilayer; sequence SIVIMLSLNFIVSLVAEEAVI. The Cytoplasmic portion of the chain corresponds to 1131 to 1196; the sequence is ENRALWMMIK…PVFESNEEQL (66 aa).

It belongs to the cation transport ATPase (P-type) (TC 3.A.3) family. Type V subfamily. Expressed in heart, placenta, liver, skeletal muscles, and pancreas. Lower levels of expression are also detected in brain, lung and kidney. Weakly expressed in the adult brain. Expression in fetal brain is higher than in adult brain, with levels similar to several other fetal tissues including spleen and skeletal muscle. In adult brain expressed at low levels in all tissues examined, including the temporal lobe and putamen. Highly expressed in the respiratory and integumentary systems.

Its subcellular location is the early endosome membrane. The protein localises to the late endosome membrane. The protein resides in the recycling endosome membrane. It catalyses the reaction ATP + H2O = ADP + phosphate + H(+). The chain is Probable cation-transporting ATPase 13A4 (ATP13A4) from Homo sapiens (Human).